The primary structure comprises 192 residues: Pyridoxal 5'-phosphate synthase subunit PdxT (192 aa).

Residue 47–49 coordinates L-glutamine; it reads GES. The active-site Nucleophile is C79. Residues R106 and 134–135 contribute to the L-glutamine site; that span reads IR. Catalysis depends on charge relay system residues H170 and E172.

It belongs to the glutaminase PdxT/SNO family. In the presence of PdxS, forms a dodecamer of heterodimers. Only shows activity in the heterodimer.

It catalyses the reaction aldehydo-D-ribose 5-phosphate + D-glyceraldehyde 3-phosphate + L-glutamine = pyridoxal 5'-phosphate + L-glutamate + phosphate + 3 H2O + H(+). The enzyme catalyses L-glutamine + H2O = L-glutamate + NH4(+). It functions in the pathway cofactor biosynthesis; pyridoxal 5'-phosphate biosynthesis. Its function is as follows. Catalyzes the hydrolysis of glutamine to glutamate and ammonia as part of the biosynthesis of pyridoxal 5'-phosphate. The resulting ammonia molecule is channeled to the active site of PdxS. This chain is Pyridoxal 5'-phosphate synthase subunit PdxT, found in Anoxybacillus flavithermus (strain DSM 21510 / WK1).